Reading from the N-terminus, the 495-residue chain is Glutamyl-tRNA(Gln) amidotransferase subunit A (495 aa).

Active-site charge relay system residues include Lys78 and Ser159. The active-site Acyl-ester intermediate is Ser183.

It belongs to the amidase family. GatA subfamily. As to quaternary structure, heterotrimer of A, B and C subunits.

It catalyses the reaction L-glutamyl-tRNA(Gln) + L-glutamine + ATP + H2O = L-glutaminyl-tRNA(Gln) + L-glutamate + ADP + phosphate + H(+). In terms of biological role, allows the formation of correctly charged Gln-tRNA(Gln) through the transamidation of misacylated Glu-tRNA(Gln) in organisms which lack glutaminyl-tRNA synthetase. The reaction takes place in the presence of glutamine and ATP through an activated gamma-phospho-Glu-tRNA(Gln). In Rhizorhabdus wittichii (strain DSM 6014 / CCUG 31198 / JCM 15750 / NBRC 105917 / EY 4224 / RW1) (Sphingomonas wittichii), this protein is Glutamyl-tRNA(Gln) amidotransferase subunit A.